The following is a 252-amino-acid chain: Phosphoglycolate phosphatase (252 aa).

The active-site Nucleophile is the Asp13. Mg(2+) contacts are provided by Asp13, Asp15, and Asp192.

Belongs to the HAD-like hydrolase superfamily. CbbY/CbbZ/Gph/YieH family. In terms of assembly, monomer. Requires Mg(2+) as cofactor. Chloride is required as a cofactor.

It carries out the reaction 2-phosphoglycolate + H2O = glycolate + phosphate. The protein operates within organic acid metabolism; glycolate biosynthesis; glycolate from 2-phosphoglycolate: step 1/1. Specifically catalyzes the dephosphorylation of 2-phosphoglycolate. Is involved in the dissimilation of the intracellular 2-phosphoglycolate formed during the DNA repair of 3'-phosphoglycolate ends, a major class of DNA lesions induced by oxidative stress. In Salmonella choleraesuis (strain SC-B67), this protein is Phosphoglycolate phosphatase.